Consider the following 266-residue polypeptide: CAAX prenyl protease 2 (266 aa).

The next 3 helical transmembrane spans lie at 1-21 (MGAGLVSACLPISYVLLVHLF), 42-59 (LLSNFVSIVVTAFYLRDY), and 78-98 (ITYPFILMNAFYLGQFVMMQI). Catalysis depends on proton donor/acceptor residues Glu-131 and His-164. 3 helical membrane passes run 186 to 206 (GFQFCYTYLFGAFATWLQLTT), 210 to 230 (IVPIIAHAFCNAQGLPLWLEI), and 239 to 259 (RLTLYAAYSVGFAAFVHLLYT).

It belongs to the peptidase U48 family.

It is found in the endoplasmic reticulum membrane. Its subcellular location is the membrane. It carries out the reaction Hydrolyzes the peptide bond -P2-(S-farnesyl or geranylgeranyl)C-P1'-P2'-P3'-COOH where P1' and P2' are amino acids with aliphatic sidechains and P3' is any C-terminal residue.. Its function is as follows. Protease involved in the processing of a variety of prenylated proteins containing the C-terminal CAAX motif, where C is a cysteine modified with an isoprenoid lipid, A is an aliphatic amino acid and X is any C-terminal amino acid. Proteolytically removes the C-terminal three residues of farnesylated and geranylated proteins, leaving the prenylated cysteine as the new C-terminus. This is CAAX prenyl protease 2 from Caenorhabditis elegans.